Consider the following 582-residue polypeptide: 2-isopropylmalate synthase (582 aa).

Positions 40 to 314 (PRWCAVDLRD…DPMIDFSDID (275 aa)) constitute a Pyruvate carboxyltransferase domain. The Mg(2+) site is built by Asp-49, His-253, His-255, and Asn-289. The tract at residues 456–582 (SPAGHPGGQW…NRAIRDNQVD (127 aa)) is regulatory domain.

This sequence belongs to the alpha-IPM synthase/homocitrate synthase family. LeuA type 2 subfamily. In terms of assembly, homodimer. It depends on Mg(2+) as a cofactor.

It localises to the cytoplasm. The enzyme catalyses 3-methyl-2-oxobutanoate + acetyl-CoA + H2O = (2S)-2-isopropylmalate + CoA + H(+). It functions in the pathway amino-acid biosynthesis; L-leucine biosynthesis; L-leucine from 3-methyl-2-oxobutanoate: step 1/4. In terms of biological role, catalyzes the condensation of the acetyl group of acetyl-CoA with 3-methyl-2-oxobutanoate (2-ketoisovalerate) to form 3-carboxy-3-hydroxy-4-methylpentanoate (2-isopropylmalate). The sequence is that of 2-isopropylmalate synthase from Renibacterium salmoninarum (strain ATCC 33209 / DSM 20767 / JCM 11484 / NBRC 15589 / NCIMB 2235).